The sequence spans 1157 residues: Peroxisomal ATPase PEX1 (1157 aa).

Disordered regions lie at residues 187–221 and 1135–1157; these read SISS…NNGE and SGRD…STLM. The segment covering 205–217 has biased composition (low complexity); it reads SSTSTATGRRSVT.

Belongs to the AAA ATPase family. As to quaternary structure, interacts with PEX6; forming the PEX1-PEX6 AAA ATPase complex, which is composed of a heterohexamer formed by a trimer of PEX1-PEX6 dimers.

Its subcellular location is the membrane. It carries out the reaction ATP + H2O = ADP + phosphate + H(+). Its function is as follows. Component of the PEX1-PEX6 AAA ATPase complex involved in peroxisome biosynthesis. The complex acts as a protein dislocase complex that mediates the ATP-dependent extraction of the PEX5 receptor from peroxisomal membranes, an essential step for PEX5 recycling. Specifically recognizes PEX5 monoubiquitinated at 'Cys-6', and pulls it out of the peroxisome lumen through the PEX2-PEX10-PEX12 retrotranslocation channel. Extraction by the PEX1-PEX6 AAA ATPase complex is accompanied by unfolding of the TPR repeats and release of bound cargo from PEX5. The polypeptide is Peroxisomal ATPase PEX1 (Komagataella pastoris (Yeast)).